The following is an 827-amino-acid chain: Discs large homolog 1-like protein (827 aa).

Disordered regions lie at residues 38–61 (HQDE…TPGP) and 102–133 (SPVV…ANPP). The segment covering 44–56 (GSPQEPSSPQFTD) has biased composition (polar residues). PDZ domains follow at residues 159–246 (EITL…RRRK), 254–341 (EIKL…AKPN), and 403–484 (KVVL…QYRP). One can recognise an SH3 domain in the interval 518-588 (KRSLYVRALF…PSKRRVEKKE (71 aa)). The disordered stretch occupies residues 595 to 618 (VKFNSKSREKGDNPDDMLSKGQSG). A Guanylate kinase-like domain is found at 637–812 (SRPVIILGPM…IYDQVKQIIE (176 aa)).

It belongs to the MAGUK family.

The protein resides in the membrane. In terms of biological role, may play a role in synapse assembly and function. This Danio rerio (Zebrafish) protein is Discs large homolog 1-like protein (dlg1l).